Consider the following 326-residue polypeptide: Neuferricin homolog (326 aa).

The N-terminal stretch at 1–34 is a signal peptide; it reads MDKNRRRTDDAGLMTKTLAGIAALVFFLSFICSS. Residues 98–197 form the Cytochrome b5 heme-binding domain; it reads KHVFTPEQLH…KEYPLVGVVA (100 aa).

This sequence belongs to the cytochrome b5 family. MAPR subfamily.

The protein localises to the secreted. Its function is as follows. Heme-binding protein. The protein is Neuferricin homolog (tag-131) of Caenorhabditis elegans.